The chain runs to 918 residues: uncharacterized protein (918 aa).

7 disordered regions span residues 66–150, 226–283, 326–481, 515–548, 594–707, 737–774, and 800–918; these read AMVH…SSYG, GADG…NADF, ADGT…EFGN, ALEK…GSNL, EITH…NAVK, NHSN…SHLT, and HITH…IIQM. Over residues 79–89 the composition is skewed to low complexity; that stretch reads QSSGSSSNTHS. Residues 103–127 show a composition bias toward basic and acidic residues; sequence NSEKKDGYNKESKVDEANENTKIKS. The segment covering 270–281 has biased composition (low complexity); it reads SKKAASASGSNA. 3 stretches are compositionally biased toward polar residues: residues 326-354, 363-372, and 379-404; these read ADGT…SSDL, KSHSTSNKTD, and ANQS…SSIE. The segment covering 430–441 has biased composition (low complexity); sequence SSSHSKSASGTS. Basic and acidic residues predominate over residues 515-533; that stretch reads ALEKNHEKNSDGTFKDESK. Composition is skewed to polar residues over residues 534 to 545 and 604 to 619; these read GSNSRVNRTDGG and VAAS…TSMS. Positions 632–647 are enriched in low complexity; that stretch reads SSQAADSHDAISASSD. The segment covering 648 to 660 has biased composition (basic and acidic residues); it reads VDAKIVKHADRSE. A compositionally biased stretch (polar residues) spans 661–672; sequence SISNDSSNQTAS. Over residues 673-688 the composition is skewed to basic and acidic residues; sequence EHNDSSKQSEHEKRQN. Polar residues predominate over residues 689–702; sequence ADGSFSDVSSNSAK. Basic and acidic residues-rich tracts occupy residues 738–765, 800–814, 830–846, and 883–918; these read HSND…DAKH, HITH…DAGH, EGFK…EGAQ, and LAKD…IIQM.

This is an uncharacterized protein from Caenorhabditis elegans.